The primary structure comprises 327 residues: Delta(6)-protoilludene synthase HYPSUDRAFT_138665 (327 aa).

Residues Asp79, Asn215, Ser219, and Glu223 each coordinate Mg(2+). A DDXXD motif motif is present at residues 79 to 83 (DEHTD). (2E,6E)-farnesyl diphosphate-binding residues include Arg304 and Tyr305.

Belongs to the terpene synthase family. Requires Mg(2+) as cofactor.

The catalysed reaction is (2E,6E)-farnesyl diphosphate = Delta(6)-protoilludene + diphosphate. Functionally, terpene cyclase that catalyzes the cyclization of farnesyl diphosphate (FPP) to delta(6)-protoilludene. This Hypholoma sublateritium (strain FD-334 SS-4) protein is Delta(6)-protoilludene synthase HYPSUDRAFT_138665.